A 78-amino-acid polypeptide reads, in one-letter code: Large ribosomal subunit protein bL28 (78 aa).

A disordered region spans residues 1-20 (MSQVCQVTGKRPVVGNNRSH).

It belongs to the bacterial ribosomal protein bL28 family.

The protein is Large ribosomal subunit protein bL28 of Idiomarina loihiensis (strain ATCC BAA-735 / DSM 15497 / L2-TR).